Consider the following 121-residue polypeptide: Large ribosomal subunit protein bL12 (121 aa).

Belongs to the bacterial ribosomal protein bL12 family. In terms of assembly, homodimer. Part of the ribosomal stalk of the 50S ribosomal subunit. Forms a multimeric L10(L12)X complex, where L10 forms an elongated spine to which 2 to 4 L12 dimers bind in a sequential fashion. Binds GTP-bound translation factors.

In terms of biological role, forms part of the ribosomal stalk which helps the ribosome interact with GTP-bound translation factors. Is thus essential for accurate translation. The protein is Large ribosomal subunit protein bL12 of Clostridium beijerinckii (strain ATCC 51743 / NCIMB 8052) (Clostridium acetobutylicum).